The chain runs to 883 residues: Alanine--tRNA ligase (883 aa).

Residues H560, H564, C665, and H669 each coordinate Zn(2+).

The protein belongs to the class-II aminoacyl-tRNA synthetase family. It depends on Zn(2+) as a cofactor.

It localises to the cytoplasm. It carries out the reaction tRNA(Ala) + L-alanine + ATP = L-alanyl-tRNA(Ala) + AMP + diphosphate. Functionally, catalyzes the attachment of alanine to tRNA(Ala) in a two-step reaction: alanine is first activated by ATP to form Ala-AMP and then transferred to the acceptor end of tRNA(Ala). Also edits incorrectly charged Ser-tRNA(Ala) and Gly-tRNA(Ala) via its editing domain. The sequence is that of Alanine--tRNA ligase from Mesomycoplasma hyopneumoniae (strain 7448) (Mycoplasma hyopneumoniae).